We begin with the raw amino-acid sequence, 471 residues long: Mitochondrial distribution and morphology protein 10 (471 aa).

The tract at residues 429–455 is disordered; sequence PSSFSSPSRAANSTPAGGGQSVGGGIS. The span at 444 to 455 shows a compositional bias: gly residues; it reads AGGGQSVGGGIS.

The protein belongs to the MDM10 family. Component of the ER-mitochondria encounter structure (ERMES) or MDM complex, composed of mmm1, mdm10, mdm12 and mdm34. Associates with the mitochondrial outer membrane sorting assembly machinery SAM(core) complex.

Its subcellular location is the mitochondrion outer membrane. Component of the ERMES/MDM complex, which serves as a molecular tether to connect the endoplasmic reticulum and mitochondria. Components of this complex are involved in the control of mitochondrial shape and protein biogenesis and may function in phospholipid exchange. mdm10 is involved in the late assembly steps of the general translocase of the mitochondrial outer membrane (TOM complex). Functions in the tom40-specific route of the assembly of outer membrane beta-barrel proteins, including the association of tom40 with the receptor tom22 and small TOM proteins. Can associate with the SAM(core) complex as well as the mdm12-mmm1 complex, both involved in late steps of the major beta-barrel assembly pathway, that is responsible for biogenesis of all outer membrane beta-barrel proteins. May act as a switch that shuttles between both complexes and channels precursor proteins into the tom40-specific pathway. Plays a role in mitochondrial morphology and in the inheritance of mitochondria. The chain is Mitochondrial distribution and morphology protein 10 (mdmB) from Aspergillus fumigatus (strain ATCC MYA-4609 / CBS 101355 / FGSC A1100 / Af293) (Neosartorya fumigata).